The primary structure comprises 276 residues: Large ribosomal subunit protein uL2 (276 aa).

Residues 221-276 form a disordered region; the sequence is RGSAMNPNDHPHGGGEGRAPIGRKSPMTPWGKKARGVKTRDRKKASNALIIRRRTK. The segment covering 252–276 has biased composition (basic residues); sequence KKARGVKTRDRKKASNALIIRRRTK.

Belongs to the universal ribosomal protein uL2 family. In terms of assembly, part of the 50S ribosomal subunit. Forms a bridge to the 30S subunit in the 70S ribosome.

In terms of biological role, one of the primary rRNA binding proteins. Required for association of the 30S and 50S subunits to form the 70S ribosome, for tRNA binding and peptide bond formation. It has been suggested to have peptidyltransferase activity; this is somewhat controversial. Makes several contacts with the 16S rRNA in the 70S ribosome. In Onion yellows phytoplasma (strain OY-M), this protein is Large ribosomal subunit protein uL2.